A 106-amino-acid polypeptide reads, in one-letter code: Transcriptional and immune response regulator (106 aa).

Monomer. Interacts with NOTCH2 (via ANK repeats), the interaction inhibits the nuclear translocation of NOTCH2 N2ICD. Interacts (C-terminus) with CBY1 (C-terminus), TCIM competes with CTNNB1 for the interaction with CBY1. As to expression, ubiquitous. Expressed in thyroid papillary carcinoma. Expressed in liver, expression levels decrease in hepatocellular carcinoma. Slightly detected in normal lung, its expression is highly induced in lung cancer cells (at protein level).

It is found in the cytoplasm. It localises to the nucleus. The protein localises to the nucleolus. Its subcellular location is the nucleus speckle. Seems to be involved in the regulation of cell growth an differentiation, may play different and opposite roles depending on the tissue or cell type. May enhance the WNT-CTNNB1 pathway by relieving antagonistic activity of CBY1. Enhances the proliferation of follicular dendritic cells. Plays a role in the mitogen-activated MAPK2/3 signaling pathway, positively regulates G1-to-S-phase transition of the cell cycle. In endothelial cells, enhances key inflammatory mediators and inflammatory response through the modulation of NF-kappaB transcriptional regulatory activity. Involved in the regulation of heat shock response, seems to play a positive feedback with HSF1 to modulate heat-shock downstream gene expression. Plays a role in the regulation of hematopoiesis even if the mechanisms are unknown. In cancers such as thyroid or lung cancer, it has been described as promoter of cell proliferation, G1-to-S-phase transition and inhibitor of apoptosis. However, it negatively regulates self-renewal of liver cancer cells via suppresion of NOTCH2 signaling. This Homo sapiens (Human) protein is Transcriptional and immune response regulator.